A 423-amino-acid polypeptide reads, in one-letter code: Glucose-1-phosphate adenylyltransferase (423 aa).

Residues tyrosine 107, glycine 172, 187–188 (EK), and serine 205 contribute to the alpha-D-glucose 1-phosphate site.

It belongs to the bacterial/plant glucose-1-phosphate adenylyltransferase family. As to quaternary structure, homotetramer.

It carries out the reaction alpha-D-glucose 1-phosphate + ATP + H(+) = ADP-alpha-D-glucose + diphosphate. It functions in the pathway glycan biosynthesis; glycogen biosynthesis. In terms of biological role, involved in the biosynthesis of ADP-glucose, a building block required for the elongation reactions to produce glycogen. Catalyzes the reaction between ATP and alpha-D-glucose 1-phosphate (G1P) to produce pyrophosphate and ADP-Glc. The polypeptide is Glucose-1-phosphate adenylyltransferase (Cereibacter sphaeroides (strain ATCC 17029 / ATH 2.4.9) (Rhodobacter sphaeroides)).